A 391-amino-acid chain; its full sequence is 2-deoxy-scyllo-inosose synthase (391 aa).

NAD(+)-binding positions include Asp42, 73–76 (EVHK), 105–109 (GVTGN), 129–130 (TT), 140–142 (SLK), and 151–152 (KN). Lys142 is an active-site residue. Glu184 is a binding site for Co(2+). Residue Glu244 is part of the active site. Residues His247 and His263 each contribute to the Co(2+) site.

The protein belongs to the sugar phosphate cyclases superfamily. DOI synthase family. Requires NAD(+) as cofactor. Co(2+) serves as cofactor.

The enzyme catalyses D-glucose 6-phosphate = 2-deoxy-L-scyllo-inosose + phosphate. It functions in the pathway metabolic intermediate biosynthesis; 2-deoxystreptamine biosynthesis; 2-deoxystreptamine from D-glucose 6-phosphate: step 1/4. It participates in antibiotic biosynthesis; ribostamycin biosynthesis. In terms of biological role, catalyzes the intramolecular carbocycle formation from D-glucose-6-phosphate to 2-deoxy-scyllo-inosose (DOI). The polypeptide is 2-deoxy-scyllo-inosose synthase (rbmA) (Streptomyces ribosidificus).